Here is a 135-residue protein sequence, read N- to C-terminus: MMFNIYLFVTFFSTILAGSLSDLEIGIIKRIPVEDCLIKAMPGDKVKVHYTGSLLESGTVFDSSYSRGSPIAFELGVGRVIKGWDQGVAGMCVGEKRKLQIPSSLAYGERGVPGVIPPSADLVFDVELVDVKSAA.

The signal sequence occupies residues 1 to 17 (MMFNIYLFVTFFSTILA). Residues 43–132 (GDKVKVHYTG…VFDVELVDVK (90 aa)) form the PPIase FKBP-type domain.

This sequence belongs to the FKBP-type PPIase family. FKBP2 subfamily.

Its subcellular location is the endoplasmic reticulum membrane. The catalysed reaction is [protein]-peptidylproline (omega=180) = [protein]-peptidylproline (omega=0). With respect to regulation, inhibited by both FK506 and rapamycin. Binds FK506 with 15-fold lower affinity than FKB1. In terms of biological role, PPIases accelerate the folding of proteins. It catalyzes the cis-trans isomerization of proline imidic peptide bonds in oligopeptides. FKBP-13 may play a role in protein trafficking in the ER. This chain is Peptidyl-prolyl cis-trans isomerase FPR2 (FPR2), found in Saccharomyces cerevisiae (strain ATCC 204508 / S288c) (Baker's yeast).